Reading from the N-terminus, the 1475-residue chain is Sex-determining transformer protein 2 (1475 aa).

Positions Met1–Ser31 are cleaved as a signal peptide. A run of 11 helical transmembrane segments spans residues Thr446 to Trp466, Ala474 to Thr494, Gly496 to Leu516, Trp589 to Ser609, Gly737 to Ile757, Ala902 to Phe922, Ala928 to Ile948, Phe952 to Phe972, Ile979 to Leu999, Ile1034 to Ile1054, and Ile1060 to Ile1080. The tract at residues Glu1133 to Ser1273 is interaction with fem-3. Disordered regions lie at residues Pro1142 to Thr1194 and Asn1267 to Pro1330. The segment covering Arg1178–Arg1188 has biased composition (basic residues). The segment covering Gln1276 to Asp1310 has biased composition (basic and acidic residues). The interval Cys1392–Arg1413 is MX regulatory domain; required for tra-1 binding. The tract at residues Thr1424–Val1475 is disordered. Basic and acidic residues predominate over residues Leu1451–Asp1469.

In terms of assembly, interacts with tra-1 and fem-3. In terms of processing, undergoes cleavage by tra-3 to produce a feminizing carboxy-terminal isoform Tra-2B. As to expression, somatic and germline tissues. Isoform Tra-2B is specific to oocytes.

Its subcellular location is the membrane. Functionally, plays a major role in controlling sexual cell fates. Promotes female development in XX animals where it sequesters one or more of the FEM proteins to the membrane thereby freeing the tra-1 protein (a putative transcription factor) to enter the nucleus and promote female development. In XO animals it acts as a receptor for her-1 which prevents it from binding to FEM proteins thereby repressing the activity of tra-1. Negatively regulates male development when bound to fem-3 and is required together with tra-1 for promoting spermatogenesis. Also required for feminizing tra-3 activity. This is Sex-determining transformer protein 2 (tra-2) from Caenorhabditis elegans.